We begin with the raw amino-acid sequence, 184 residues long: Protein CPn_0803/CP_1068/CPj0803/CpB0832 (184 aa).

The protein belongs to the chlamydial CPn_0803/CT_584/TC_0873 family.

The protein is Protein CPn_0803/CP_1068/CPj0803/CpB0832 of Chlamydia pneumoniae (Chlamydophila pneumoniae).